A 546-amino-acid chain; its full sequence is Chaperonin GroEL 1 (546 aa).

ATP is bound by residues 30–33, K51, 87–91, G415, 479–481, and D495; these read TLGP, DGTTT, and NAA. The segment at 526 to 546 is disordered; it reads KEDAPMPGGMPGGMGGMGMDM. Over residues 534-546 the composition is skewed to gly residues; it reads GMPGGMGGMGMDM.

It belongs to the chaperonin (HSP60) family. In terms of assembly, forms a cylinder of 14 subunits composed of two heptameric rings stacked back-to-back. Interacts with the co-chaperonin GroES.

The protein resides in the cytoplasm. It catalyses the reaction ATP + H2O + a folded polypeptide = ADP + phosphate + an unfolded polypeptide.. Together with its co-chaperonin GroES, plays an essential role in assisting protein folding. The GroEL-GroES system forms a nano-cage that allows encapsulation of the non-native substrate proteins and provides a physical environment optimized to promote and accelerate protein folding. This is Chaperonin GroEL 1 from Burkholderia pseudomallei (strain 1106a).